A 374-amino-acid polypeptide reads, in one-letter code: Queuine tRNA-ribosyltransferase (374 aa).

D89 acts as the Proton acceptor in catalysis. Residues 89–93 (DSGGF), D143, Q187, and G214 each bind substrate. An RNA binding region spans residues 245–251 (GVGKPED). The active-site Nucleophile is the D264. Positions 269 to 273 (TRNAR) are RNA binding; important for wobble base 34 recognition. Positions 302, 304, 307, and 333 each coordinate Zn(2+).

The protein belongs to the queuine tRNA-ribosyltransferase family. In terms of assembly, homodimer. Within each dimer, one monomer is responsible for RNA recognition and catalysis, while the other monomer binds to the replacement base PreQ1. Zn(2+) is required as a cofactor.

It carries out the reaction 7-aminomethyl-7-carbaguanine + guanosine(34) in tRNA = 7-aminomethyl-7-carbaguanosine(34) in tRNA + guanine. The protein operates within tRNA modification; tRNA-queuosine biosynthesis. Catalyzes the base-exchange of a guanine (G) residue with the queuine precursor 7-aminomethyl-7-deazaguanine (PreQ1) at position 34 (anticodon wobble position) in tRNAs with GU(N) anticodons (tRNA-Asp, -Asn, -His and -Tyr). Catalysis occurs through a double-displacement mechanism. The nucleophile active site attacks the C1' of nucleotide 34 to detach the guanine base from the RNA, forming a covalent enzyme-RNA intermediate. The proton acceptor active site deprotonates the incoming PreQ1, allowing a nucleophilic attack on the C1' of the ribose to form the product. After dissociation, two additional enzymatic reactions on the tRNA convert PreQ1 to queuine (Q), resulting in the hypermodified nucleoside queuosine (7-(((4,5-cis-dihydroxy-2-cyclopenten-1-yl)amino)methyl)-7-deazaguanosine). The sequence is that of Queuine tRNA-ribosyltransferase from Serratia proteamaculans (strain 568).